Reading from the N-terminus, the 233-residue chain is 1-(5-phosphoribosyl)-5-[(5-phosphoribosylamino)methylideneamino] imidazole-4-carboxamide isomerase (233 aa).

Residue Asp-8 is the Proton acceptor of the active site. Asp-125 serves as the catalytic Proton donor.

It belongs to the HisA/HisF family.

Its subcellular location is the cytoplasm. The enzyme catalyses 1-(5-phospho-beta-D-ribosyl)-5-[(5-phospho-beta-D-ribosylamino)methylideneamino]imidazole-4-carboxamide = 5-[(5-phospho-1-deoxy-D-ribulos-1-ylimino)methylamino]-1-(5-phospho-beta-D-ribosyl)imidazole-4-carboxamide. The protein operates within amino-acid biosynthesis; L-histidine biosynthesis; L-histidine from 5-phospho-alpha-D-ribose 1-diphosphate: step 4/9. The chain is 1-(5-phosphoribosyl)-5-[(5-phosphoribosylamino)methylideneamino] imidazole-4-carboxamide isomerase from Thermococcus kodakarensis (strain ATCC BAA-918 / JCM 12380 / KOD1) (Pyrococcus kodakaraensis (strain KOD1)).